Reading from the N-terminus, the 252-residue chain is MSRKPFIAGNWKMNKNPEEAKAFVEAVASKLPSADLVEAGIAVPAVDLTTVIAAAKGSNLKVAAQNTYFENSGAFTGETSPQVLKEIGTDYVVIGHSERRDYFHETDEDINKKAKAIFANGMIPIICCGESLETYEAGKAAEFVGAQVSAALAGLTPEQVASSVIAYEPIWAIGTGKSASQDDAQKMCKVVRDVVAADFGQEVADKVRVLYGGSVKPENVAEYMACPDVDGALVGGASLEPESFLALLDFVK.

Substrate is bound at residue 10 to 12 (NWK). The active-site Electrophile is His96. Residue Glu168 is the Proton acceptor of the active site. Residues Gly174, Ser214, and 235–236 (GG) contribute to the substrate site.

It belongs to the triosephosphate isomerase family. Homodimer.

The protein resides in the cytoplasm. It catalyses the reaction D-glyceraldehyde 3-phosphate = dihydroxyacetone phosphate. It functions in the pathway carbohydrate biosynthesis; gluconeogenesis. Its pathway is carbohydrate degradation; glycolysis; D-glyceraldehyde 3-phosphate from glycerone phosphate: step 1/1. Functionally, involved in the gluconeogenesis. Catalyzes stereospecifically the conversion of dihydroxyacetone phosphate (DHAP) to D-glyceraldehyde-3-phosphate (G3P). This Streptococcus thermophilus (strain CNRZ 1066) protein is Triosephosphate isomerase.